Here is a 468-residue protein sequence, read N- to C-terminus: Aldehyde dehydrogenase family 3 member B1 (468 aa).

Methionine 1 is modified (N-acetylmethionine). An NAD(+)-binding site is contributed by 188–193 (GNTYVG). Residues glutamate 210 and cysteine 244 contribute to the active site. Residues cysteine 462 and cysteine 463 are each lipidated (S-palmitoyl cysteine). The residue at position 465 (cysteine 465) is a Cysteine methyl ester. A lipid anchor (S-geranylgeranyl cysteine) is attached at cysteine 465. The propeptide at 466-468 (TLL) is removed in mature form.

It belongs to the aldehyde dehydrogenase family. Dually lipidated in the C-terminus; prenylation occurs prior to, and is a prerequisite for palmitoylation. It is also required for activity towards long-chain substrates.

The protein localises to the cell membrane. It carries out the reaction an aldehyde + NAD(+) + H2O = a carboxylate + NADH + 2 H(+). The enzyme catalyses a long-chain fatty aldehyde + NAD(+) + H2O = a long-chain fatty acid + NADH + 2 H(+). It catalyses the reaction a medium-chain fatty aldehyde + NAD(+) + H2O = a medium-chain fatty acid + NADH + 2 H(+). The catalysed reaction is octanal + NAD(+) + H2O = octanoate + NADH + 2 H(+). It carries out the reaction nonanal + NAD(+) + H2O = nonanoate + NADH + 2 H(+). The enzyme catalyses hexadecanoate + NADH + 2 H(+) = hexadecanal + NAD(+) + H2O. It catalyses the reaction (2E)-octenal + NAD(+) + H2O = (2E)-octenoate + NADH + 2 H(+). The catalysed reaction is (E)-non-2-enal + NAD(+) + H2O = (E)-non-2-enoate + NADH + 2 H(+). It carries out the reaction (E)-4-hydroxynon-2-enal + NAD(+) + H2O = (E)-4-hydroxynon-2-enoate + NADH + 2 H(+). The enzyme catalyses (2E)-hexadecenal + NAD(+) + H2O = (E)-hexadec-2-enoate + NADH + 2 H(+). It catalyses the reaction benzaldehyde + NAD(+) + H2O = benzoate + NADH + 2 H(+). The catalysed reaction is an aldehyde + NADP(+) + H2O = a carboxylate + NADPH + 2 H(+). It carries out the reaction a medium-chain fatty aldehyde + NADP(+) + H2O = a medium-chain fatty acid + NADPH + 2 H(+). The enzyme catalyses hexanal + NADP(+) + H2O = hexanoate + NADPH + 2 H(+). It catalyses the reaction octanal + NADP(+) + H2O = octanoate + NADPH + 2 H(+). The catalysed reaction is nonanal + NADP(+) + H2O = nonanoate + NADPH + 2 H(+). It carries out the reaction (2E)-octenal + NADP(+) + H2O = (2E)-octenoate + NADPH + 2 H(+). The enzyme catalyses (E)-non-2-enal + NADP(+) + H2O = (E)-non-2-enoate + NADPH + 2 H(+). It catalyses the reaction (E)-4-hydroxynon-2-enal + NADP(+) + H2O = (E)-4-hydroxynon-2-enoate + NADPH + 2 H(+). The catalysed reaction is benzaldehyde + NADP(+) + H2O = benzoate + NADPH + 2 H(+). Its pathway is alcohol metabolism; ethanol degradation; acetate from ethanol: step 2/2. Its function is as follows. Oxidizes medium and long chain saturated and unsaturated fatty aldehydes generated in the plasma membrane into non-toxic fatty acids. May have a protective role against the cytotoxicity induced by lipid peroxidation. Short-chain fatty aldehydes are not good substrates. Can use both NADP(+) and NAD(+) as electron acceptor in vitro, however in vivo preference will depend on their tissue levels. Low activity towards acetaldehyde and 3,4-dihydroxyphenylacetaldehyde. Able to metabolize aromatic aldehydes such as benzaldehyde to their acid form. The chain is Aldehyde dehydrogenase family 3 member B1 (Aldh3b1) from Rattus norvegicus (Rat).